Here is a 101-residue protein sequence, read N- to C-terminus: uncharacterized protein (101 aa).

Helical transmembrane passes span 35–55 (LWTM…LIII) and 66–86 (FLFF…TLLF).

Its subcellular location is the membrane. This is an uncharacterized protein from Saccharomyces cerevisiae (strain ATCC 204508 / S288c) (Baker's yeast).